We begin with the raw amino-acid sequence, 1129 residues long: Large proline-rich protein bag6 (1129 aa).

The 76-residue stretch at 1 to 76 folds into the Ubiquitin-like domain; the sequence is MEVTVKTLDS…HLVERAPPQT (76 aa). Disordered stretches follow at residues 69-108, 187-235, 347-402, 490-518, 550-606, 654-692, 942-967, and 987-1009; these read VERA…PERN, QPVN…SPSE, TGNG…HPHP, PAAP…VPGA, GSNT…QHLS, VPVS…ESLP, VPQA…NGAA, and VPTI…QWAA. A compositionally biased stretch (low complexity) spans 73 to 105; the sequence is PPQTQPSTGGPSTSSSTSPSSSNAANVPGAGAP. 2 stretches are compositionally biased toward polar residues: residues 209-232 and 364-383; these read RETL…SHPS and HTPT…QPPS. Composition is skewed to low complexity over residues 553–593 and 655–666; these read TPSS…SSGP and PVSTSPPQSASQ. A compositionally biased stretch (pro residues) spans 667–686; sequence APPPSSPSPPPAHSSPPPAA. The span at 947–956 shows a compositional bias: polar residues; that stretch reads EASSQDQPME.

In terms of assembly, component of the bag6/bat3 complex.

It localises to the cytoplasm. It is found in the cytosol. The protein resides in the nucleus. The protein localises to the secreted. Its subcellular location is the extracellular exosome. In terms of biological role, ATP-independent molecular chaperone preventing the aggregation of misfolded and hydrophobic patches-containing proteins. Functions as part of a cytosolic protein quality control complex, the bag6/bat3 complex, which maintains these client proteins in a soluble state and participates in their proper delivery to the endoplasmic reticulum or alternatively can promote their sorting to the proteasome where they undergo degradation. The bag6/bat3 complex is involved in the post-translational delivery of tail-anchored/type II transmembrane proteins to the endoplasmic reticulum membrane. Similarly, the bag6/bat3 complex also functions as a sorting platform for proteins of the secretory pathway that are mislocalized to the cytosol either delivering them to the proteasome for degradation or to the endoplasmic reticulum. The bag6/bat3 complex also plays a role in the endoplasmic reticulum-associated degradation (ERAD), a quality control mechanism that eliminates unwanted proteins of the endoplasmic reticulum through their retrotranslocation to the cytosol and their targeting to the proteasome. It maintains these retrotranslocated proteins in an unfolded yet soluble state condition in the cytosol to ensure their proper delivery to the proteasome. Also required for selective ubiquitin-mediated degradation of defective nascent chain polypeptides by the proteasome. Also involved in endoplasmic reticulum stress-induced pre-emptive quality control, a mechanism that selectively attenuates the translocation of newly synthesized proteins into the endoplasmic reticulum and reroutes them to the cytosol for proteasomal degradation. May ensure the proper degradation of these proteins and thereby protects the endoplasmic reticulum from protein overload upon stress. By stabilizing a large spectrum of proteins, may indirectly affect different biological processes including apoptosis. By controlling the steady-state expression of the IGF1R receptor, indirectly regulates the insulin-like growth factor receptor signaling pathway. Functionally, when nuclear, may also act as a component of some chromatin regulator complex. In Xenopus tropicalis (Western clawed frog), this protein is Large proline-rich protein bag6.